We begin with the raw amino-acid sequence, 871 residues long: MVGFARTKFCKNLSSLSDNGENHEKPYTFEGNRQTVNDICNVLETGPWGPSAENTLSALSFKPQPEFVIGVLRRLKDVNRAIEYFRWYERRTELPHCPESYNSLLLVMARCRNFDALDQILGEMSVAGFGPSVNTCIEMVLGCVKANKLREGYDVVQMMRKFKFRPAFSAYTTLIGAFSAVNHSDMMLTLFQQMQELGYEPTVHLFTTLIRGFAKEGRVDSALSLLDEMKSSSLDADIVLYNVCIDSFGKVGKVDMAWKFFHEIEANGLKPDEVTYTSMIGVLCKANRLDEAVEMFEHLEKNRRVPCTYAYNTMIMGYGSAGKFDEAYSLLERQRAKGSIPSVIAYNCILTCLRKMGKVDEALKVFEEMKKDAAPNLSTYNILIDMLCRAGKLDTAFELRDSMQKAGLFPNVRTVNIMVDRLCKSQKLDEACAMFEEMDYKVCTPDEITFCSLIDGLGKVGRVDDAYKVYEKMLDSDCRTNSIVYTSLIKNFFNHGRKEDGHKIYKDMINQNCSPDLQLLNTYMDCMFKAGEPEKGRAMFEEIKARRFVPDARSYSILIHGLIKAGFANETYELFYSMKEQGCVLDTRAYNIVIDGFCKCGKVNKAYQLLEEMKTKGFEPTVVTYGSVIDGLAKIDRLDEAYMLFEEAKSKRIELNVVIYSSLIDGFGKVGRIDEAYLILEELMQKGLTPNLYTWNSLLDALVKAEEINEALVCFQSMKELKCTPNQVTYGILINGLCKVRKFNKAFVFWQEMQKQGMKPSTISYTTMISGLAKAGNIAEAGALFDRFKANGGVPDSACYNAMIEGLSNGNRAMDAFSLFEETRRRGLPIHNKTCVVLLDTLHKNDCLEQAAIVGAVLRETGKARHAARSW.

PPR repeat units follow at residues 97–131, 132–166, 167–201, 202–236, 237–271, 272–306, 307–341, 342–372, 376–410, 411–445, 446–480, 481–515, 516–550, 551–585, 586–620, 621–655, 656–690, 691–725, 726–760, 761–795, and 796–830; these read CPES…GFGP, SVNT…KFRP, AFSA…GYEP, TVHL…SLDA, DIVL…GLKP, DEVT…RRVP, CTYA…GSIP, SVIA…MKKD, NLST…GLFP, NVRT…VCTP, DEIT…DCRT, NSIV…NCSP, DLQL…RFVP, DARS…GCVL, DTRA…GFEP, TVVT…RIEL, NVVI…GLTP, NLYT…KCTP, NQVT…GMKP, STIS…GGVP, and DSAC…GLPI.

This sequence belongs to the PPR family. P subfamily.

The protein is Pentatricopeptide repeat-containing protein At3g06920 of Arabidopsis thaliana (Mouse-ear cress).